The sequence spans 426 residues: D-tagatose-1,6-bisphosphate aldolase subunit KbaZ (426 aa).

It belongs to the GatZ/KbaZ family. KbaZ subfamily. In terms of assembly, forms a complex with KbaY.

The protein operates within carbohydrate metabolism; D-tagatose 6-phosphate degradation; D-glyceraldehyde 3-phosphate and glycerone phosphate from D-tagatose 6-phosphate: step 2/2. Component of the tagatose-1,6-bisphosphate aldolase KbaYZ that is required for full activity and stability of the Y subunit. Could have a chaperone-like function for the proper and stable folding of KbaY. When expressed alone, KbaZ does not show any aldolase activity. This Escherichia coli O7:K1 (strain IAI39 / ExPEC) protein is D-tagatose-1,6-bisphosphate aldolase subunit KbaZ.